The chain runs to 341 residues: N-acetyl-gamma-glutamyl-phosphate reductase (341 aa).

Residue Cys-146 is part of the active site.

The protein belongs to the NAGSA dehydrogenase family. Type 1 subfamily.

It localises to the cytoplasm. It carries out the reaction N-acetyl-L-glutamate 5-semialdehyde + phosphate + NADP(+) = N-acetyl-L-glutamyl 5-phosphate + NADPH + H(+). Its pathway is amino-acid biosynthesis; L-arginine biosynthesis; N(2)-acetyl-L-ornithine from L-glutamate: step 3/4. Catalyzes the NADPH-dependent reduction of N-acetyl-5-glutamyl phosphate to yield N-acetyl-L-glutamate 5-semialdehyde. This Limosilactobacillus fermentum (strain NBRC 3956 / LMG 18251) (Lactobacillus fermentum) protein is N-acetyl-gamma-glutamyl-phosphate reductase.